A 235-amino-acid chain; its full sequence is Serine protease SplA (235 aa).

A signal peptide spans 1 to 35 (MNKNVMVKGLTALDILTSLGCAENISDQPHSIAKA). Residues His74, Asp113, and Ser189 each act as charge relay system in the active site.

It belongs to the peptidase S1B family.

Its subcellular location is the secreted. The chain is Serine protease SplA (splA) from Staphylococcus aureus.